A 208-amino-acid chain; its full sequence is Small ribosomal subunit protein uS4 (208 aa).

Residues Thr95 to Glu159 enclose the S4 RNA-binding domain.

The protein belongs to the universal ribosomal protein uS4 family. In terms of assembly, part of the 30S ribosomal subunit. Contacts protein S5. The interaction surface between S4 and S5 is involved in control of translational fidelity.

In terms of biological role, one of the primary rRNA binding proteins, it binds directly to 16S rRNA where it nucleates assembly of the body of the 30S subunit. Functionally, with S5 and S12 plays an important role in translational accuracy. The chain is Small ribosomal subunit protein uS4 from Borreliella afzelii (strain PKo) (Borrelia afzelii).